Reading from the N-terminus, the 271-residue chain is Formamidopyrimidine-DNA glycosylase (271 aa).

Pro-2 acts as the Schiff-base intermediate with DNA in catalysis. Glu-3 functions as the Proton donor in the catalytic mechanism. Lys-57 acts as the Proton donor; for beta-elimination activity in catalysis. His-90, Arg-109, and Lys-151 together coordinate DNA. Residues 236–270 form an FPG-type zinc finger; sequence HVYGRGGETCTECGHLLSEIRLGQRTTVFCSLCQT. The active-site Proton donor; for delta-elimination activity is the Arg-260.

The protein belongs to the FPG family. In terms of assembly, monomer. It depends on Zn(2+) as a cofactor.

The enzyme catalyses Hydrolysis of DNA containing ring-opened 7-methylguanine residues, releasing 2,6-diamino-4-hydroxy-5-(N-methyl)formamidopyrimidine.. It catalyses the reaction 2'-deoxyribonucleotide-(2'-deoxyribose 5'-phosphate)-2'-deoxyribonucleotide-DNA = a 3'-end 2'-deoxyribonucleotide-(2,3-dehydro-2,3-deoxyribose 5'-phosphate)-DNA + a 5'-end 5'-phospho-2'-deoxyribonucleoside-DNA + H(+). Functionally, involved in base excision repair of DNA damaged by oxidation or by mutagenic agents. Acts as a DNA glycosylase that recognizes and removes damaged bases. Has a preference for oxidized purines, such as 7,8-dihydro-8-oxoguanine (8-oxoG). Has AP (apurinic/apyrimidinic) lyase activity and introduces nicks in the DNA strand. Cleaves the DNA backbone by beta-delta elimination to generate a single-strand break at the site of the removed base with both 3'- and 5'-phosphates. In Shewanella amazonensis (strain ATCC BAA-1098 / SB2B), this protein is Formamidopyrimidine-DNA glycosylase.